The chain runs to 511 residues: Cytochrome P450 monooxygenase cypX (511 aa).

Residues 18 to 38 (LPFSLALVAAAFVLYNIVSII) traverse the membrane as a helical segment. N162 and N407 each carry an N-linked (GlcNAc...) asparagine glycan. C454 is a binding site for heme.

This sequence belongs to the cytochrome P450 family. Heme is required as a cofactor.

It is found in the membrane. Its pathway is mycotoxin biosynthesis. Its function is as follows. Cytochrome P450 monooxygenase; part of the fragmented gene cluster that mediates the biosynthesis of dothistromin (DOTH), a polyketide toxin very similar in structure to the aflatoxin precursor, versicolorin B. The first step of the pathway is the conversion of acetate to norsolorinic acid (NOR) and requires the fatty acid synthase subunits hexA and hexB, as well as the polyketide synthase pksA. PksA combines a hexanoyl starter unit and 7 malonyl-CoA extender units to synthesize the precursor NOR. The hexanoyl starter unit is provided to the acyl-carrier protein (ACP) domain by the fungal fatty acid synthase hexA/hexB. The second step is the conversion of NOR to averantin (AVN) and requires the norsolorinic acid ketoreductase nor1, which catalyzes the dehydration of norsolorinic acid to form (1'S)-averantin. The cytochrome P450 monooxygenase avnA then catalyzes the hydroxylation of AVN to 5'hydroxyaverantin (HAVN). The next step is performed by adhA that transforms HAVN to averufin (AVF). Averufin might then be converted to hydroxyversicolorone by cypX and avfA. Hydroxyversicolorone is further converted versiconal hemiacetal acetate (VHA) by moxY. VHA is then the substrate for the versiconal hemiacetal acetate esterase est1 to yield versiconal (VAL). Versicolorin B synthase vbsA then converts VAL to versicolorin B (VERB) by closing the bisfuran ring. Then, the activity of the versicolorin B desaturase verB leads to versicolorin A (VERA). DotB, a predicted chloroperoxidase, may perform epoxidation of the A-ring of VERA. Alternatively, a cytochrome P450, such as cypX or avnA could catalyze this step. It is also possible that another, uncharacterized, cytochrome P450 enzyme is responsible for this step. Opening of the epoxide could potentially be achieved by the epoxide hydrolase epoA. However, epoA seems not to be required for DOTH biosynthesis, but other epoxide hydrolases may have the ability to complement this hydrolysis. Alternatively, opening of the epoxide ring could be achieved non-enzymatically. The next step is the deoxygenation of ring A to yield the 5,8-dihydroxyanthraquinone which is most likely catalyzed by the NADPH dehydrogenase encoded by ver1. The last stages of DOTH biosynthesis are proposed to involve hydroxylation of the bisfuran. OrdB and norB might have oxidative roles here. An alternative possibility is that cytochrome P450 monoogenases such as avnA and cypX might perform these steps in addition to previously proposed steps. The chain is Cytochrome P450 monooxygenase cypX from Dothistroma septosporum (Red band needle blight fungus).